The chain runs to 422 residues: UDP-N-acetylglucosamine 1-carboxyvinyltransferase (422 aa).

22–23 (KN) is a binding site for phosphoenolpyruvate. R93 serves as a coordination point for UDP-N-acetyl-alpha-D-glucosamine. Catalysis depends on C117, which acts as the Proton donor. Position 117 is a 2-(S-cysteinyl)pyruvic acid O-phosphothioketal (C117). UDP-N-acetyl-alpha-D-glucosamine contacts are provided by residues 122–126 (RPVDL), D308, and I330.

This sequence belongs to the EPSP synthase family. MurA subfamily.

It is found in the cytoplasm. It carries out the reaction phosphoenolpyruvate + UDP-N-acetyl-alpha-D-glucosamine = UDP-N-acetyl-3-O-(1-carboxyvinyl)-alpha-D-glucosamine + phosphate. Its pathway is cell wall biogenesis; peptidoglycan biosynthesis. Its function is as follows. Cell wall formation. Adds enolpyruvyl to UDP-N-acetylglucosamine. The chain is UDP-N-acetylglucosamine 1-carboxyvinyltransferase from Legionella pneumophila (strain Paris).